Reading from the N-terminus, the 474-residue chain is GTPase Der (474 aa).

2 EngA-type G domains span residues 3 to 167 and 204 to 379; these read FTVA…GVDR and LRVA…MVWN. Residues 9-16, 56-60, 119-122, 210-217, 257-261, and 322-325 contribute to the GTP site; these read GRPNVGKS, DTAGL, NKSE, GRPNAGKS, DTAGM, and NKWD. A KH-like domain is found at 380 to 464; the sequence is KRISTAKLNR…PIRIHLKASE (85 aa).

The protein belongs to the TRAFAC class TrmE-Era-EngA-EngB-Septin-like GTPase superfamily. EngA (Der) GTPase family. In terms of assembly, associates with the 50S ribosomal subunit.

Its function is as follows. GTPase that plays an essential role in the late steps of ribosome biogenesis. The sequence is that of GTPase Der from Allorhizobium ampelinum (strain ATCC BAA-846 / DSM 112012 / S4) (Agrobacterium vitis (strain S4)).